We begin with the raw amino-acid sequence, 284 residues long: L-ribulose-5-phosphate 3-epimerase UlaE (284 aa).

This sequence belongs to the L-ribulose-5-phosphate 3-epimerase family.

The catalysed reaction is L-ribulose 5-phosphate = L-xylulose 5-phosphate. It functions in the pathway cofactor degradation; L-ascorbate degradation; D-xylulose 5-phosphate from L-ascorbate: step 3/4. Catalyzes the isomerization of L-xylulose-5-phosphate to L-ribulose-5-phosphate. Is involved in the anaerobic L-ascorbate utilization. The sequence is that of L-ribulose-5-phosphate 3-epimerase UlaE from Escherichia coli O45:K1 (strain S88 / ExPEC).